The sequence spans 449 residues: UDP-N-acetylmuramoylalanine--D-glutamate ligase (449 aa).

118-124 (GTNGKTT) contacts ATP.

The protein belongs to the MurCDEF family.

It localises to the cytoplasm. The catalysed reaction is UDP-N-acetyl-alpha-D-muramoyl-L-alanine + D-glutamate + ATP = UDP-N-acetyl-alpha-D-muramoyl-L-alanyl-D-glutamate + ADP + phosphate + H(+). It participates in cell wall biogenesis; peptidoglycan biosynthesis. Its function is as follows. Cell wall formation. Catalyzes the addition of glutamate to the nucleotide precursor UDP-N-acetylmuramoyl-L-alanine (UMA). The chain is UDP-N-acetylmuramoylalanine--D-glutamate ligase from Staphylococcus aureus (strain Mu3 / ATCC 700698).